The primary structure comprises 407 residues: Dual-specificity RNA methyltransferase RlmN (407 aa).

Glu-136 acts as the Proton acceptor in catalysis. A Radical SAM core domain is found at 144–378 (REDRGAVCIS…MDAGFASPIR (235 aa)). Cys-151 and Cys-389 are disulfide-bonded. The [4Fe-4S] cluster site is built by Cys-158, Cys-162, and Cys-165. S-adenosyl-L-methionine contacts are provided by residues 215 to 216 (GE), Ser-247, 269 to 271 (SLH), and Asn-346. Residue Cys-389 is the S-methylcysteine intermediate of the active site.

This sequence belongs to the radical SAM superfamily. RlmN family. It depends on [4Fe-4S] cluster as a cofactor.

It localises to the cytoplasm. It catalyses the reaction adenosine(2503) in 23S rRNA + 2 reduced [2Fe-2S]-[ferredoxin] + 2 S-adenosyl-L-methionine = 2-methyladenosine(2503) in 23S rRNA + 5'-deoxyadenosine + L-methionine + 2 oxidized [2Fe-2S]-[ferredoxin] + S-adenosyl-L-homocysteine. The enzyme catalyses adenosine(37) in tRNA + 2 reduced [2Fe-2S]-[ferredoxin] + 2 S-adenosyl-L-methionine = 2-methyladenosine(37) in tRNA + 5'-deoxyadenosine + L-methionine + 2 oxidized [2Fe-2S]-[ferredoxin] + S-adenosyl-L-homocysteine. In terms of biological role, specifically methylates position 2 of adenine 2503 in 23S rRNA and position 2 of adenine 37 in tRNAs. m2A2503 modification seems to play a crucial role in the proofreading step occurring at the peptidyl transferase center and thus would serve to optimize ribosomal fidelity. This chain is Dual-specificity RNA methyltransferase RlmN, found in Gluconobacter oxydans (strain 621H) (Gluconobacter suboxydans).